A 177-amino-acid polypeptide reads, in one-letter code: MSRQLNMDTLRQNFWKEEYLKEMMLRYEWQRKYGTLVKAKQKAKAASRLPRKLPTLLPQASVAPPPPASKTTPSKAPSPAPEPLFLSDMYPVAPNTKALLYEGISHDLQGRYQYLNTRKLDLPETRYLFPITTNFTYGWQLGPPTKQELVSCKMCRIESFFRKNGAFALLDPRDLAL.

The disordered stretch occupies residues 47-80 (SRLPRKLPTLLPQASVAPPPPASKTTPSKAPSPA).

This is Protein SPMIP1 (Spmip1) from Mus musculus (Mouse).